A 156-amino-acid polypeptide reads, in one-letter code: uncharacterized protein (156 aa).

A signal peptide spans 1–27 (MKLLVLRLILIISTIFVLLNLSCMVNG). Asn-20, Asn-83, Asn-103, Asn-106, and Asn-134 each carry an N-linked (GlcNAc...) asparagine glycan.

It localises to the secreted. This is an uncharacterized protein from Dictyostelium discoideum (Social amoeba).